The chain runs to 37 residues: Large ribosomal subunit protein bL36 (37 aa).

The protein belongs to the bacterial ribosomal protein bL36 family.

The polypeptide is Large ribosomal subunit protein bL36 (Dehalococcoides mccartyi (strain ATCC BAA-2266 / KCTC 15142 / 195) (Dehalococcoides ethenogenes (strain 195))).